A 256-amino-acid polypeptide reads, in one-letter code: uncharacterized protein (256 aa).

The next 2 membrane-spanning stretches (helical) occupy residues 155–175 (ITGM…GLWL) and 203–223 (ITTT…YLLI).

The protein resides in the cell membrane. This is an uncharacterized protein from Mycobacterium bovis (strain ATCC BAA-935 / AF2122/97).